The following is a 440-amino-acid chain: Ribosomal protein uS12 methylthiotransferase RimO (440 aa).

Positions 6-116 constitute an MTTase N-terminal domain; it reads PKVGFVSLGC…VVSAVHEVVP (111 aa). Residues Cys-15, Cys-51, Cys-80, Cys-149, Cys-153, and Cys-156 each contribute to the [4Fe-4S] cluster site. The 240-residue stretch at 135 to 374 folds into the Radical SAM core domain; sequence LTPRHYAYLK…AHQQAISSAR (240 aa). Residues 376–440 form the TRAM domain; the sequence is QAKIGLEMDV…DEYDMWGELV (65 aa).

It belongs to the methylthiotransferase family. RimO subfamily. [4Fe-4S] cluster serves as cofactor.

It localises to the cytoplasm. It carries out the reaction L-aspartate(89)-[ribosomal protein uS12]-hydrogen + (sulfur carrier)-SH + AH2 + 2 S-adenosyl-L-methionine = 3-methylsulfanyl-L-aspartate(89)-[ribosomal protein uS12]-hydrogen + (sulfur carrier)-H + 5'-deoxyadenosine + L-methionine + A + S-adenosyl-L-homocysteine + 2 H(+). Functionally, catalyzes the methylthiolation of an aspartic acid residue of ribosomal protein uS12. The protein is Ribosomal protein uS12 methylthiotransferase RimO of Ectopseudomonas mendocina (strain ymp) (Pseudomonas mendocina).